Consider the following 351-residue polypeptide: Autoinducer 2 import system permease protein LsrC (351 aa).

A run of 9 helical transmembrane segments spans residues leucine 14–leucine 34, methionine 39–leucine 59, isoleucine 70–alanine 90, leucine 93–leucine 113, isoleucine 115–leucine 135, isoleucine 155–tryptophan 175, methionine 213–proline 233, glycine 252–leucine 272, and leucine 284–aspartate 304.

The protein belongs to the binding-protein-dependent transport system permease family. AraH/RbsC subfamily. In terms of assembly, the complex is composed of two ATP-binding proteins (LsrA), two transmembrane proteins (LsrC and LsrD) and a solute-binding protein (LsrB).

The protein localises to the cell inner membrane. Functionally, part of the ABC transporter complex LsrABCD involved in autoinducer 2 (AI-2) import. Probably responsible for the translocation of the substrate across the membrane. This chain is Autoinducer 2 import system permease protein LsrC (lsrC), found in Yersinia pseudotuberculosis serotype IB (strain PB1/+).